Here is a 177-residue protein sequence, read N- to C-terminus: Large ribosomal subunit protein uL6 (177 aa).

It belongs to the universal ribosomal protein uL6 family. As to quaternary structure, part of the 50S ribosomal subunit.

In terms of biological role, this protein binds to the 23S rRNA, and is important in its secondary structure. It is located near the subunit interface in the base of the L7/L12 stalk, and near the tRNA binding site of the peptidyltransferase center. The chain is Large ribosomal subunit protein uL6 from Enterobacter sp. (strain 638).